The sequence spans 231 residues: 2-C-methyl-D-erythritol 4-phosphate cytidylyltransferase (231 aa).

The protein belongs to the IspD/TarI cytidylyltransferase family. IspD subfamily.

It catalyses the reaction 2-C-methyl-D-erythritol 4-phosphate + CTP + H(+) = 4-CDP-2-C-methyl-D-erythritol + diphosphate. Its pathway is isoprenoid biosynthesis; isopentenyl diphosphate biosynthesis via DXP pathway; isopentenyl diphosphate from 1-deoxy-D-xylulose 5-phosphate: step 2/6. In terms of biological role, catalyzes the formation of 4-diphosphocytidyl-2-C-methyl-D-erythritol from CTP and 2-C-methyl-D-erythritol 4-phosphate (MEP). The polypeptide is 2-C-methyl-D-erythritol 4-phosphate cytidylyltransferase (Lysinibacillus sphaericus (strain C3-41)).